The chain runs to 357 residues: MDTTAISPLTPLGVIPDLKNATSVPFNETACENWKEIHHLVFHVANICFAAGLVIPTTLNLHMIFLRGLLTVGCALFIIWATLYRCALDIMIWNSVFLVVNLLHFIYLVYKRRPIKIEKELSSLYKRMFEPLHVPPELFQRLTGQFCNIQTLKTGQAYAAEDKTSVDDRLSILLKGKMKVSYRGHFLHNIYPCAFIDSPEFRSTQMNRGEKFQVTIIADDNCKFLCWSRERLTYFLETEPFLYEIFKYLIGKDITNKLYSLNDPTLNDKASKKIDRQPSLCSQLSVMQMRNSMASTSDSEDGLQMFLRGTSSSSSLRPGRTSPYLRTSAKMKPIEESVEDDVFEAPSAEKLELQRLP.

Over 1 to 38 the chain is Extracellular; it reads MDTTAISPLTPLGVIPDLKNATSVPFNETACENWKEIH. N-linked (GlcNAc...) asparagine glycans are attached at residues asparagine 20 and asparagine 27. Residues 39 to 59 form a helical membrane-spanning segment; that stretch reads HLVFHVANICFAAGLVIPTTL. At 60 to 62 the chain is on the cytoplasmic side; sequence NLH. A helical membrane pass occupies residues 63-83; it reads MIFLRGLLTVGCALFIIWATL. The Extracellular portion of the chain corresponds to 84 to 89; the sequence is YRCALD. A helical membrane pass occupies residues 90 to 110; sequence IMIWNSVFLVVNLLHFIYLVY. Residues 111–357 are Cytoplasmic-facing; it reads KRRPIKIEKE…AEKLELQRLP (247 aa). Residues 309 to 323 are compositionally biased toward low complexity; sequence GTSSSSSLRPGRTSP. The tract at residues 309–357 is disordered; sequence GTSSSSSLRPGRTSPYLRTSAKMKPIEESVEDDVFEAPSAEKLELQRLP. The segment covering 347-357 has biased composition (basic and acidic residues); sequence SAEKLELQRLP.

The protein belongs to the popeye family. Homodimer. Homodimerization requires the C-terminus cytoplasmic region. In terms of tissue distribution, expressed in the heart and skeletal muscle (at protein level). Isoform 1 and isoform 4: expressed in heart, muscle, brain, stomach, kidney, lung and spleen.

The protein resides in the lateral cell membrane. The protein localises to the cell junction. It localises to the tight junction. It is found in the membrane. Its subcellular location is the cell membrane. The protein resides in the sarcolemma. The protein localises to the caveola. Its function is as follows. Cell adhesion molecule involved in the establishment and/or maintenance of cell integrity. Involved in the formation and regulation of the tight junction (TJ) paracellular permeability barrier in epithelial cells. Induces primordial adhesive contact and aggregation of epithelial cells in a Ca(2+)-independent manner. Involved in epithelial movement during corneal sheet formation and regeneration. May play a role in VAMP3-mediated vesicular transport and recycling of receptor molecules. May play a role in the regulation of cell shape and movement by modulating the Rho-GTPase activity. May be involved in skeletal muscle and heart development as well as in the maintenance of heart function. May also be involved in striated muscle regeneration and in the regulation of cell spreading. The polypeptide is Popeye domain-containing protein 1 (POPDC1) (Gallus gallus (Chicken)).